The chain runs to 556 residues: MAVAAAAAAGPVFWRRLLGLLPGRPGLAALLGRLSDRLGRNRDRQRRRSPWLLLAPLLSPAVPQVTSPPCCLCPEGVHRFQWIRNLVPEFGVSSSHVRVLSSPAESFELMKGQIRVAKRRVVMASLYLGTGPLEQELVDCLESTLEKSLQAKFPSNLKVSILLDFTRGSRGRKNSRTMLLPLPQRFPEQVRVSLFHTPHLRGLLRLLIPERFNETIGLQHIKVYLFDNSVILSGANLSDSYFTNRQDRYVFLQDCAEIADFFTELVDAVGDVSLQLQGDDTVQVVDGMVHPYKGDRTEYCKAANKRVMDVINSARTRQQMLHAQTFHSNSLLTQEDAAAAGDRRPAPDTWIYPLIQMKPFEIQIDEIVTETLLTEAERGAKVYLTTGYFNLTQAYMDLVLGTRAEYQILLASPEVNGFFGAKGVVGAIPAAYVHIERQFYSEVCSLGQQERVQLQEYWRRGWTFHAKGLWLYLAGSSLPCLTLIGSPNFGYRSVHRDLEAQIAIVTENEALQQQLHQEQEQLYLRSGVVSSATFEQPSRQVKLWVKMVTPLIKNFF.

The transit peptide at 1–28 (MAVAAAAAAGPVFWRRLLGLLPGRPGLA) directs the protein to the mitochondrion. Ser49 carries the post-translational modification Phosphoserine. 124 to 131 (ASLYLGTG) contacts ATP. 2 PLD phosphodiesterase domains span residues 215-241 (TIGL…SDSY) and 460-493 (RGWT…GYRS). Residues His220, Lys222, and Asp227 contribute to the active site.

It belongs to the CDP-alcohol phosphatidyltransferase class-II family.

It localises to the mitochondrion. The enzyme catalyses a CDP-1,2-diacyl-sn-glycerol + sn-glycerol 3-phosphate = a 1,2-diacyl-sn-glycero-3-phospho-(1'-sn-glycero-3'-phosphate) + CMP + H(+). Its pathway is phospholipid metabolism; phosphatidylglycerol biosynthesis; phosphatidylglycerol from CDP-diacylglycerol: step 1/2. Activated by calcium and magnesium and inhibited by other bivalent cations. Its function is as follows. Functions in the biosynthesis of the anionic phospholipids phosphatidylglycerol and cardiolipin. The sequence is that of CDP-diacylglycerol--glycerol-3-phosphate 3-phosphatidyltransferase, mitochondrial (PGS1) from Pongo abelii (Sumatran orangutan).